Reading from the N-terminus, the 245-residue chain is Glutathione S-transferase T1 (245 aa).

The GST N-terminal domain occupies 2-83 (MKLKVYADRM…YLSSAFPSVA (82 aa)). Residues 12–13 (SQ), 41–42 (QL), 54–55 (KV), and 67–68 (ES) contribute to the glutathione site. One can recognise a GST C-terminal domain in the interval 90–233 (DLSKRAKIHS…KEGFQKRREM (144 aa)). Residues 243–245 (SKI) carry the Microbody targeting signal motif.

The protein belongs to the GST superfamily. Theta family.

The protein localises to the nucleus. The protein resides in the peroxisome. The enzyme catalyses RX + glutathione = an S-substituted glutathione + a halide anion + H(+). Functionally, in vitro, possesses glutathione S-transferase activity toward 1-chloro-2,4-dinitrobenzene (CDNB) and p-nitrobenzyl chloride (pNBC), and glutathione peroxidase activity toward cumene hydroperoxide and linoleic acid-13-hydroperoxide. May be involved in the conjugation of reduced glutathione to a wide number of exogenous and endogenous hydrophobic electrophiles and have a detoxification role against certain herbicides. This chain is Glutathione S-transferase T1 (GSTT1), found in Arabidopsis thaliana (Mouse-ear cress).